A 403-amino-acid chain; its full sequence is MGRANKVVLAYSGGVDTSVCIPYLKQEWGVEEVITFAADLGQGDELEPIRQKALDAGASQSLVGDLIQPFIEEFAFPAIRANALYEGRYPLSTALARPLIARRLVEVAREVGADAVAHGCTGKGNDQVRFDVAIAALAPDLKVLTPAREWGMSREETIAYGERCGIPAPVSKKSPYSIDLNLLGRSIEAGPLEDPMVAPPEEVFAMTSPMSDTPDAAEEIEIAFEAGNPVAINGQVLDPVAMIREANRLAGSHGIGRLDMIENRVVGIKSREIYETPGLLLLIQAHQELESLTLAADVLRSKRQLEMQWADLVYQGLWFGPLKDALDGFMDRTQQHVNGVVRLRLYKGNATVIGRGSTQSSLYVPAMASYGSEDAFDHRAAEGFIYVWGLPTRLWAASQRTSG.

ATP is bound by residues 10–18 (AYSGGVDTS) and Ala-38. Tyr-89 contacts L-citrulline. ATP is bound at residue Gly-119. L-aspartate contacts are provided by Thr-121, Asn-125, and Asp-126. Asn-125 is a binding site for L-citrulline. Residues Arg-129, Ser-177, Ser-186, Glu-262, and Tyr-274 each contribute to the L-citrulline site.

Belongs to the argininosuccinate synthase family. Type 1 subfamily. As to quaternary structure, homotetramer.

It is found in the cytoplasm. The enzyme catalyses L-citrulline + L-aspartate + ATP = 2-(N(omega)-L-arginino)succinate + AMP + diphosphate + H(+). It participates in amino-acid biosynthesis; L-arginine biosynthesis; L-arginine from L-ornithine and carbamoyl phosphate: step 2/3. The polypeptide is Argininosuccinate synthase (Parasynechococcus marenigrum (strain WH8102)).